Consider the following 448-residue polypeptide: Probable glycine dehydrogenase (decarboxylating) subunit 1 (448 aa).

Belongs to the GcvP family. N-terminal subunit subfamily. As to quaternary structure, the glycine cleavage system is composed of four proteins: P, T, L and H. In this organism, the P 'protein' is a heterodimer of two subunits.

It catalyses the reaction N(6)-[(R)-lipoyl]-L-lysyl-[glycine-cleavage complex H protein] + glycine + H(+) = N(6)-[(R)-S(8)-aminomethyldihydrolipoyl]-L-lysyl-[glycine-cleavage complex H protein] + CO2. Functionally, the glycine cleavage system catalyzes the degradation of glycine. The P protein binds the alpha-amino group of glycine through its pyridoxal phosphate cofactor; CO(2) is released and the remaining methylamine moiety is then transferred to the lipoamide cofactor of the H protein. This Geobacillus kaustophilus (strain HTA426) protein is Probable glycine dehydrogenase (decarboxylating) subunit 1.